Consider the following 884-residue polypeptide: MADAAVELPGRLAILPFRNKVLLPGAIVRIRCTNPSSVKLVEQELWQREEKGLIGVLPVHDSEAAGSLLSPGVGSDSGEGGSKAPGGSAGESTKQDTKNGKETIHWHSRGVAARALHLSRGVEKPSGRVTYIVVLEGLCRFSVQELSARGSYHVARVSRLDMTKTELEHAEQDPDLIALSRQFKATAMELISVLEQKQKTVGRTKVLLETVPVYRLADIFVASFEISFEEQLSMLDSVDLKVRLSKATELVDRHLQSILVAEKITQKVEGQLSKSQKEFLLRQQMRAIKEELGDNDDDEDDVAALERKMQNAGMPANIWKHAQRELRRLRKMQPQQPGYSSSRTYLELLAELPWQKVSEERELDLRAAKESLDRDHYGLTKVKQRIIEYLAVRKLKPDARGPVLCFVGPPGVGKTSLASSIAKALNRKFIRISLGGVKDEADIRGHRRTYIGSMPGRLIDGLKRVSVSNPVMLLDEIDKTGSDVRGDPASALLEVLDPEQNKTFNDHYLNVPFDLSKVIFVATANRMQPIPPPLLDRMEVIELPGYTPEEKLKIAMKHLIPRVLEQHGLSSTYLQIPEAMVRLIIERYTREAGVRNLERNLAALARAAAVKVAEQDSVLRLGKEIQPITTTLLDSRLADGGEVEMEVIPMGQDISNTYENPSPMIVDEAMLEKVLGPPRFDDSEAADRVASPGVSVGLVWTSFGGEVQFVEATAMVGKGDLHLTGQLGDVIKESAQLALTWVRARAADLNLSPTSDINLLESRDIHIHFPAGAVPKDGPSAGVTLVTSLVSLFSHRKVRADTAMTGEMTLRGLVLPVGGVKDKVLAAHRYGIKRVILPERNMKDLAEVPAPILSGLEILLVKRIEEVLDHAFEGGCPLRPHSKL.

The 244-residue stretch at 12 to 255 (LAILPFRNKV…KATELVDRHL (244 aa)) folds into the Lon N-terminal domain. Positions 67–101 (SLLSPGVGSDSGEGGSKAPGGSAGESTKQDTKNGK) are disordered. The segment covering 75–89 (SDSGEGGSKAPGGSA) has biased composition (gly residues). Position 408–415 (408–415 (GPPGVGKT)) interacts with ATP. Residues 689–874 (VASPGVSVGL…EEVLDHAFEG (186 aa)) enclose the Lon proteolytic domain. Catalysis depends on residues Ser-780 and Lys-823. Residues 882–884 (SKL) carry the Microbody targeting signal motif.

The protein belongs to the peptidase S16 family. As to expression, expressed in roots, leaves and panicles.

Its subcellular location is the peroxisome matrix. It catalyses the reaction Hydrolysis of proteins in presence of ATP.. Functionally, ATP-dependent serine protease that mediates the selective degradation of misfolded and unassembled polypeptides in the peroxisomal matrix. Necessary for type 2 peroxisome targeting signal (PTS2)-containing protein processing and facilitates peroxisome matrix protein import. In Oryza sativa subsp. indica (Rice), this protein is Lon protease homolog 2, peroxisomal (LON1).